A 500-amino-acid polypeptide reads, in one-letter code: Serine carboxypeptidase 3 (500 aa).

The signal sequence occupies residues 1-21 (MATARVSLILLVVVLAASACA). A propeptide spanning residues 22-73 (EGLRLPRDAKFPAAQAERLIRSLNLLPKEAGPTGAGDVPSVAPGELLERRVT) is cleaved from the precursor. 3 disulfides stabilise this stretch: cysteine 126–cysteine 366, cysteine 294–cysteine 309, and cysteine 332–cysteine 337. Residue asparagine 144 is glycosylated (N-linked (GlcNAc...) asparagine). Residue serine 216 is part of the active site. Aspartate 404 is an active-site residue. Cysteine 407 contributes to the substrate binding site. Histidine 461 is an active-site residue. Positions 485–500 (EEWLAELPEQPMYAAM) are excised as a propeptide.

This sequence belongs to the peptidase S10 family. As to quaternary structure, monomer.

It carries out the reaction Release of a C-terminal amino acid with broad specificity.. This Oryza sativa subsp. japonica (Rice) protein is Serine carboxypeptidase 3 (CBP3).